A 918-amino-acid polypeptide reads, in one-letter code: MISPQGVAVATLLILGVVHGSLIDDLKAKFSSSSSGFGASMFSNSGAKSSFGGGFAMPKLDASKAAMVHSSSSHKGHHQSSGSSSNTHSLTVVGADGKNITENSEKKDGYNKESKVDEANENTKIKSADGSVIETGKSHNKSSDDASSYGLEKSSKTYADKNGTMLSSNTNKINNQSRSAALDEGNEFVNQQNADGTFLRNNTGHKNTDEHLSHNVLDENAQMSIGADGTSHNITNRKGSVGDSHNAASDAHSNFESLDAQGNKKSQNYSKKAASASGSNADFESNLESLKNADGTSMSNSTGNFNNTSYDKATAEEVMSKKNVNADGTSSMEASHAGSNSSKINSASGQSSDLSMVGPNGIKSHSTSNKTDNYALDEANQSAGSISEQIGKNGQRSLNESSIESGRKAESRNNTAADTLDSVDANGTVSSSHSKSASGTSLDENHNKTHALQASVDEHGNMKNHSIDGSYRNKKTGEFGNSEMSASIKNADGTMSQVNVKNDTNRNTYEAEKSALEKNHEKNSDGTFKDESKGSNSRVNRTDGGSNLAVGSYSVGKGGVSSNETIASSNAFNTSDAESNQFDHLHQKTANGTEITHAKDSKQVAASANAKSSLDTSMSAVDAKGNKVDKTSSQAADSHDAISASSDVDAKIVKHADRSESISNDSSNQTASEHNDSSKQSEHEKRQNADGSFSDVSSNSAKKNAVKDATDVRQNAFANVDAAGNSVSEVKNSLVENHSNDSDASSDSKIHSKSVDGTELTDAKHSNVSTSHLTEGQLAQIQKKLAMADGSVVMSNDNSHITHEKSRADVDAGHKAHLSKADGSSTDIDEGFKHHSDLESRGEGAQKQRYQKLGNGTESSMDVGYEKSMAKGGDQTSSHKKTLAKDGKGHFTETKDGSESHHKIDDKDVKQHKDIIQM.

7 disordered regions span residues 66-150, 226-283, 326-481, 515-548, 594-707, 737-774, and 800-918; these read AMVH…SSYG, GADG…NADF, ADGT…EFGN, ALEK…GSNL, EITH…NAVK, NHSN…SHLT, and HITH…IIQM. A compositionally biased stretch (low complexity) spans 79 to 89; that stretch reads QSSGSSSNTHS. Residues 103 to 127 show a composition bias toward basic and acidic residues; sequence NSEKKDGYNKESKVDEANENTKIKS. Low complexity predominate over residues 270–281; the sequence is SKKAASASGSNA. Composition is skewed to polar residues over residues 326 to 354, 363 to 372, and 379 to 404; these read ADGT…SSDL, KSHSTSNKTD, and ANQS…SSIE. The segment covering 430-441 has biased composition (low complexity); that stretch reads SSSHSKSASGTS. The segment covering 515–533 has biased composition (basic and acidic residues); the sequence is ALEKNHEKNSDGTFKDESK. Polar residues-rich tracts occupy residues 534–545 and 604–619; these read GSNSRVNRTDGG and VAAS…TSMS. Low complexity predominate over residues 632–647; that stretch reads SSQAADSHDAISASSD. The span at 648–660 shows a compositional bias: basic and acidic residues; sequence VDAKIVKHADRSE. Residues 661-672 show a composition bias toward polar residues; the sequence is SISNDSSNQTAS. Residues 673–688 show a composition bias toward basic and acidic residues; sequence EHNDSSKQSEHEKRQN. Residues 689 to 702 are compositionally biased toward polar residues; the sequence is ADGSFSDVSSNSAK. 4 stretches are compositionally biased toward basic and acidic residues: residues 738–765, 800–814, 830–846, and 883–918; these read HSND…DAKH, HITH…DAGH, EGFK…EGAQ, and LAKD…IIQM.

This is an uncharacterized protein from Caenorhabditis elegans.